The following is a 53-amino-acid chain: Large ribosomal subunit protein bL33 (53 aa).

This sequence belongs to the bacterial ribosomal protein bL33 family.

This chain is Large ribosomal subunit protein bL33, found in Blochmanniella floridana.